A 473-amino-acid polypeptide reads, in one-letter code: Phosphatidylserine synthase 1 (473 aa).

Residue alanine 2 is modified to N-acetylalanine. The Cytoplasmic portion of the chain corresponds to alanine 2 to aspartate 35. Residues phenylalanine 36 to phenylalanine 56 form a helical membrane-spanning segment. Topologically, residues alanine 57–glycine 72 are lumenal. Residues isoleucine 73–phenylalanine 93 traverse the membrane as a helical segment. Residues threonine 94–arginine 102 are Cytoplasmic-facing. Residues methionine 103–phenylalanine 123 traverse the membrane as a helical segment. Residues glutamate 124–tyrosine 186 are Lumenal-facing. Residues glycine 187–leucine 207 traverse the membrane as a helical segment. Topologically, residues proline 208 to aspartate 216 are cytoplasmic. Residues glutamine 217–cysteine 237 traverse the membrane as a helical segment. The Lumenal segment spans residues arginine 238 to arginine 286. Residues valine 287–leucine 307 form a helical membrane-spanning segment. Over lysine 308 to leucine 319 the chain is Cytoplasmic. Residues serine 320–leucine 342 form a helical membrane-spanning segment. Residues threonine 343–tryptophan 355 lie on the Lumenal side of the membrane. The chain crosses the membrane as a helical span at residues valine 356–phenylalanine 376. Over serine 377–tyrosine 383 the chain is Cytoplasmic. A helical transmembrane segment spans residues valine 384 to tryptophan 404. The Lumenal portion of the chain corresponds to tyrosine 405–lysine 473. 4 positions are modified to phosphoserine: serine 417, serine 425, serine 442, and serine 454. The segment at tryptophan 430–lysine 473 is disordered. Residues serine 455–serine 464 are compositionally biased toward basic residues.

Belongs to the phosphatidyl serine synthase family.

The protein resides in the endoplasmic reticulum membrane. The enzyme catalyses a 1,2-diacyl-sn-glycero-3-phosphoethanolamine + L-serine = a 1,2-diacyl-sn-glycero-3-phospho-L-serine + ethanolamine. The catalysed reaction is a 1,2-diacyl-sn-glycero-3-phosphocholine + L-serine = a 1,2-diacyl-sn-glycero-3-phospho-L-serine + choline. It functions in the pathway phospholipid metabolism; phosphatidylserine biosynthesis. Its function is as follows. Catalyzes a base-exchange reaction in which the polar head group of phosphatidylethanolamine (PE) or phosphatidylcholine (PC) is replaced by L-serine. Catalyzes mainly the conversion of phosphatidylcholine but also converts, in vitro and to a lesser extent, phosphatidylethanolamine. The protein is Phosphatidylserine synthase 1 (Ptdss1) of Rattus norvegicus (Rat).